The following is a 205-amino-acid chain: MIGKLKGVIDEIAEDHAVIDVHGVGYVAFCSARTLGNLGGVGEAAILFIETYVREDMIRLYGFANQLEREWFRLLQNVQGVGAKVALAVLGTLSPSELANAIALRDIAMVSRAPGVGKKVAERIVTELKNKAPAFAGDASGTIGLKQELGAGAAPAPVADAVSALSNLGYSRDQAANAVAAALKEAGENADSAKLIRLGLKELSR.

The domain I stretch occupies residues Met-1–Ala-64. The segment at Asn-65 to Ile-143 is domain II. Residues Gly-144 to Gly-152 are flexible linker. The segment at Ala-153–Arg-205 is domain III.

Belongs to the RuvA family. As to quaternary structure, homotetramer. Forms an RuvA(8)-RuvB(12)-Holliday junction (HJ) complex. HJ DNA is sandwiched between 2 RuvA tetramers; dsDNA enters through RuvA and exits via RuvB. An RuvB hexamer assembles on each DNA strand where it exits the tetramer. Each RuvB hexamer is contacted by two RuvA subunits (via domain III) on 2 adjacent RuvB subunits; this complex drives branch migration. In the full resolvosome a probable DNA-RuvA(4)-RuvB(12)-RuvC(2) complex forms which resolves the HJ.

It is found in the cytoplasm. The RuvA-RuvB-RuvC complex processes Holliday junction (HJ) DNA during genetic recombination and DNA repair, while the RuvA-RuvB complex plays an important role in the rescue of blocked DNA replication forks via replication fork reversal (RFR). RuvA specifically binds to HJ cruciform DNA, conferring on it an open structure. The RuvB hexamer acts as an ATP-dependent pump, pulling dsDNA into and through the RuvAB complex. HJ branch migration allows RuvC to scan DNA until it finds its consensus sequence, where it cleaves and resolves the cruciform DNA. This is Holliday junction branch migration complex subunit RuvA from Brucella anthropi (strain ATCC 49188 / DSM 6882 / CCUG 24695 / JCM 21032 / LMG 3331 / NBRC 15819 / NCTC 12168 / Alc 37) (Ochrobactrum anthropi).